The following is an 86-amino-acid chain: Large ribosomal subunit protein uL23 (86 aa).

The protein belongs to the universal ribosomal protein uL23 family. In terms of assembly, part of the 50S ribosomal subunit. Contacts protein L29.

In terms of biological role, binds to 23S rRNA. One of the proteins that surrounds the polypeptide exit tunnel on the outside of the ribosome. The protein is Large ribosomal subunit protein uL23 of Thermococcus sibiricus (strain DSM 12597 / MM 739).